Reading from the N-terminus, the 127-residue chain is Large ribosomal subunit protein bL17 (127 aa).

The protein belongs to the bacterial ribosomal protein bL17 family. Part of the 50S ribosomal subunit. Contacts protein L32.

The sequence is that of Large ribosomal subunit protein bL17 from Limosilactobacillus reuteri (strain DSM 20016) (Lactobacillus reuteri).